A 438-amino-acid polypeptide reads, in one-letter code: Putative galacturan 1,4-alpha-galacturonidase A (438 aa).

A signal peptide spans Met-1–Ala-21. Residues Asn-28, Asn-102, Asn-111, and Asn-197 are each glycosylated (N-linked (GlcNAc...) asparagine). PbH1 repeat units follow at residues Ser-186–Arg-222 and Ser-223–Gly-244. Catalysis depends on Asp-237, which acts as the Proton donor. N-linked (GlcNAc...) asparagine glycosylation is found at Asn-245, Asn-253, Asn-279, Asn-325, Asn-353, Asn-372, and Asn-388. PbH1 repeat units follow at residues Ser-246–Ser-266, Val-277–Ser-303, and Val-323–Thr-344. Cys-397 and Cys-403 are oxidised to a cystine. A glycan (N-linked (GlcNAc...) asparagine) is linked at Asn-418.

This sequence belongs to the glycosyl hydrolase 28 family.

Its subcellular location is the secreted. The enzyme catalyses [(1-&gt;4)-alpha-D-galacturonosyl](n) + H2O = alpha-D-galacturonate + [(1-&gt;4)-alpha-D-galacturonosyl](n-1). Its function is as follows. Specific in hydrolyzing the terminal glycosidic bond of polygalacturonic acid and oligogalacturonates. This chain is Putative galacturan 1,4-alpha-galacturonidase A (rgxA), found in Aspergillus niger.